We begin with the raw amino-acid sequence, 1022 residues long: Protein translocase subunit SECA1, chloroplastic (1022 aa).

A chloroplast-targeting transit peptide spans 1–72 (MVSPLCDSQL…SRKRSTSVNA (72 aa)). At S73 the chain carries N-acetylserine. 176-183 (MRTGEGKT) contacts ATP. The segment at 985–1022 (KDEEKKSQNGKPSKQVDNASEKPKQVGVTDEPSSIASA) is disordered. Positions 993–1002 (NGKPSKQVDN) are enriched in polar residues.

The protein belongs to the SecA family. Part of the Sec protein translocation apparatus. Interacts probably with SCY1. Expressed in green tissues, including cotyledons, rosette and cauline leaves, and sepals. Also detected at the base and the tip of the trichome.

It localises to the plastid. Its subcellular location is the chloroplast stroma. It is found in the chloroplast thylakoid membrane. The enzyme catalyses ATP + H2O + chloroplast-proteinSide 1 = ADP + phosphate + chloroplast-proteinSide 2.. Has a central role in coupling the hydrolysis of ATP to the transfer of proteins across the thylakoid membrane. Involved in photosynthetic acclimation and required for chloroplast biogenesis. The protein is Protein translocase subunit SECA1, chloroplastic of Arabidopsis thaliana (Mouse-ear cress).